Consider the following 177-residue polypeptide: Putative adenylate kinase (177 aa).

ATP contacts are provided by G10, G12, K13, T14, and T15. The NMP stretch occupies residues 30 to 50; that stretch reads NLRDYALEKGIGEMKENELEI. Residues 99–109 form an LID region; the sequence is ERGYGREKLGE. ATP contacts are provided by R100 and K138.

It belongs to the adenylate kinase family. AK6 subfamily. Interacts with uS11. Not a structural component of 40S pre-ribosomes, but transiently interacts with them by binding to uS11.

The catalysed reaction is AMP + ATP = 2 ADP. It carries out the reaction ATP + H2O = ADP + phosphate + H(+). Broad-specificity nucleoside monophosphate (NMP) kinase that catalyzes the reversible transfer of the terminal phosphate group between nucleoside triphosphates and monophosphates. Also has ATPase activity. Involved in the late maturation steps of the 30S ribosomal particles, specifically 16S rRNA maturation. While NMP activity is not required for ribosome maturation, ATPase activity is. Associates transiently with small ribosomal subunit protein uS11. ATP hydrolysis breaks the interaction with uS11. May temporarily remove uS11 from the ribosome to enable a conformational change of the ribosomal RNA that is needed for the final maturation step of the small ribosomal subunit. The sequence is that of Putative adenylate kinase from Thermococcus kodakarensis (strain ATCC BAA-918 / JCM 12380 / KOD1) (Pyrococcus kodakaraensis (strain KOD1)).